A 281-amino-acid chain; its full sequence is Undecaprenyl-diphosphatase (281 aa).

6 consecutive transmembrane segments (helical) span residues 90–110, 113–133, 147–167, 191–211, 217–237, and 257–277; these read WLVTLGTIPIGVLGLLFQDSI, VLRGFVVIGTTLWLFALVLGA, LSWKHGLLFGLAQALALIPGV, SFLLAIPAVVLSGFYQLYDEL, IAWVPTAVATVVAFVVGYAVI, and IAAAVVVYALVLAGALPAFQG.

The protein belongs to the UppP family.

It is found in the cell membrane. The catalysed reaction is di-trans,octa-cis-undecaprenyl diphosphate + H2O = di-trans,octa-cis-undecaprenyl phosphate + phosphate + H(+). Its function is as follows. Catalyzes the dephosphorylation of undecaprenyl diphosphate (UPP). Confers resistance to bacitracin. This Kineococcus radiotolerans (strain ATCC BAA-149 / DSM 14245 / SRS30216) protein is Undecaprenyl-diphosphatase.